We begin with the raw amino-acid sequence, 165 residues long: ATP synthase subunit delta, mitochondrial (165 aa).

Residues 1–27 constitute a mitochondrion transit peptide; sequence MNSLRIARAALRVRPTAVRAPLQRRGY.

Belongs to the ATPase epsilon chain family. As to quaternary structure, F-type ATPases have 2 components, CF(1) - the catalytic core - and CF(0) - the membrane proton channel. CF(1) has five subunits: alpha(3), beta(3), gamma(1), delta(1), epsilon(1). CF(0) has three main subunits: a, b and c.

It is found in the mitochondrion. The protein localises to the mitochondrion inner membrane. Its function is as follows. Mitochondrial membrane ATP synthase (F(1)F(0) ATP synthase or Complex V) produces ATP from ADP in the presence of a proton gradient across the membrane which is generated by electron transport complexes of the respiratory chain. F-type ATPases consist of two structural domains, F(1) - containing the extramembraneous catalytic core, and F(0) - containing the membrane proton channel, linked together by a central stalk and a peripheral stalk. During catalysis, ATP turnover in the catalytic domain of F(1) is coupled via a rotary mechanism of the central stalk subunits to proton translocation. Part of the complex F(1) domain and of the central stalk which is part of the complex rotary element. Rotation of the central stalk against the surrounding alpha(3)beta(3) subunits leads to hydrolysis of ATP in three separate catalytic sites on the beta subunits. The sequence is that of ATP synthase subunit delta, mitochondrial (des) from Neurospora crassa (strain ATCC 24698 / 74-OR23-1A / CBS 708.71 / DSM 1257 / FGSC 987).